A 739-amino-acid polypeptide reads, in one-letter code: Homeobox protein SIX5 (739 aa).

3 stretches are compositionally biased toward low complexity: residues 1–24 (MATL…AAAA), 34–61 (QLLQ…AAGA), and 74–83 (PEAASEPPTG). Disordered stretches follow at residues 1-84 (MATL…PTGL), 251-294 (NRRQ…AAPV), 361-381 (LTGG…SETK), and 617-650 (LSAQ…FPAP). A DNA-binding region (homeobox) is located at residues 201–260 (GEETVYCFKERSRAALKACYRGNRYPTPDEKRRLATLTGLSLTQVSNWFKNRRQRDRTGA). Positions 279-289 (ESSRSPEDLER) are enriched in basic and acidic residues. Residues 617-646 (LSAQQPPPAAATTSSTSLPFSPDSPGLLPN) are compositionally biased toward low complexity.

The protein belongs to the SIX/Sine oculis homeobox family. As to quaternary structure, probably binds DNA dimer. Interacts with EYA3, and probably EYA1 and EYA2. As to expression, expressed in adult but not in fetal eyes. Found in corneal epithelium and endothelium, lens epithelium, ciliary body epithelia, cellular layers of the retina and the sclera.

The protein resides in the cytoplasm. The protein localises to the nucleus. Its function is as follows. Transcription factor that is thought to be involved in regulation of organogenesis. May be involved in determination and maintenance of retina formation. Binds a 5'-GGTGTCAG-3' motif present in the ARE regulatory element of ATP1A1. Binds a 5'-TCA[AG][AG]TTNC-3' motif present in the MEF3 element in the myogenin promoter, and in the IGFBP5 promoter. Thought to be regulated by association with Dach and Eya proteins, and seems to be coactivated by EYA1, EYA2 and EYA3. In Homo sapiens (Human), this protein is Homeobox protein SIX5 (SIX5).